Reading from the N-terminus, the 175-residue chain is Large ribosomal subunit protein uL10 (175 aa).

It belongs to the universal ribosomal protein uL10 family. In terms of assembly, part of the ribosomal stalk of the 50S ribosomal subunit. The N-terminus interacts with L11 and the large rRNA to form the base of the stalk. The C-terminus forms an elongated spine to which L12 dimers bind in a sequential fashion forming a multimeric L10(L12)X complex.

In terms of biological role, forms part of the ribosomal stalk, playing a central role in the interaction of the ribosome with GTP-bound translation factors. This is Large ribosomal subunit protein uL10 from Desulfotalea psychrophila (strain LSv54 / DSM 12343).